We begin with the raw amino-acid sequence, 406 residues long: Cholinephosphotransferase 1 (406 aa).

An N-acetylalanine modification is found at A2. At 2–62 the chain is on the cytoplasmic side; the sequence is AAGAGAGSAP…LLQWIPLWMA (61 aa). Residues 63 to 83 traverse the membrane as a helical segment; the sequence is PNSITLLGLAVNVVTTLVLIS. N64 is a binding site for CDP-choline. The Lumenal portion of the chain corresponds to 84 to 93; it reads YCPTATEEAP. The chain crosses the membrane as a helical span at residues 94–118; that stretch reads YWTYLLCALGLFIYQSLDAIDGKQA. The Mg(2+) site is built by D111 and D114. R119 is a CDP-choline binding site. The Cytoplasmic portion of the chain corresponds to 119–125; that stretch reads RRTNSCS. A helical membrane pass occupies residues 126–150; sequence PLGELFDHGCDSLSTVFMAVGASIA. D132 serves as a coordination point for Mg(2+). H133 acts as the Proton acceptor in catalysis. Mg(2+) is bound at residue D136. Topologically, residues 151-160 are lumenal; sequence ARLGTYPDWF. Residues 161 to 179 traverse the membrane as a helical segment; it reads FFCSFIGMFVFYCAHWQTY. At 180–190 the chain is on the cytoplasmic side; sequence VSGMLRFGKVD. A helical membrane pass occupies residues 191–207; sequence VTEIQIALVIVFVLSAF. Residues 208–222 lie on the Lumenal side of the membrane; the sequence is GGATMWDYTIPILEI. Residues 223–248 traverse the membrane as a helical segment; sequence KLKILPVLGFLGGVIFSCSNYFHVIL. Residues 249 to 265 lie on the Cytoplasmic side of the membrane; it reads HGGVGKNGSTIAGTSVL. Residues 266 to 281 form a helical membrane-spanning segment; it reads SPGLHIGLIIILAIMI. Over 282–293 the chain is Lumenal; the sequence is YKKSATDVFEKH. Residues 294 to 316 traverse the membrane as a helical segment; that stretch reads PCLYILMFGCVFAKVSQKLVVAH. Over 317-329 the chain is Cytoplasmic; the sequence is MTKSELYLQDTVF. The helical transmembrane segment at 330–339 threads the bilayer; that stretch reads LGPGLLFLDQ. Residues 340-346 are Lumenal-facing; that stretch reads YFNNFID. The helical transmembrane segment at 347 to 376 threads the bilayer; it reads EYVVLWMAMVISSFDMVIYFSALCLQISRH. Over 377–406 the chain is Cytoplasmic; that stretch reads LHLNIFKTACHQAPEQVQVLSSKSHQNNMD.

The protein belongs to the CDP-alcohol phosphatidyltransferase class-I family. Requires Mg(2+) as cofactor. Mn(2+) is required as a cofactor. Highly expressed in testis, colon, small intestine, heart, prostate and spleen. Also detected in kidney, skeletal muscle, pancreas, leukocytes, ovary and thymus. Weakly expressed in the brain, placenta and lung. Overexpressed in cancerous breast epithelial cell lines.

The protein resides in the golgi apparatus membrane. It catalyses the reaction CDP-choline + a 1,2-diacyl-sn-glycerol = a 1,2-diacyl-sn-glycero-3-phosphocholine + CMP + H(+). It carries out the reaction 1-octadecanoyl-2-(5Z,8Z,11Z,14Z-eicosatetraenoyl)-sn-glycerol + CDP-choline = 1-octadecanoyl-2-(5Z,8Z,11Z,14Z-eicosatetraenoyl)-sn-glycero-3-phosphocholine + CMP + H(+). The enzyme catalyses 1-hexadecanoyl-2-(9Z-octadecenoyl)-sn-glycerol + CDP-choline = 1-hexadecanoyl-2-(9Z-octadecenoyl)-sn-glycero-3-phosphocholine + CMP + H(+). The catalysed reaction is 1-hexadecanoyl-2-(4Z,7Z,10Z,13Z,16Z,19Z-docosahexaenoyl)-sn-glycerol + CDP-choline = 1-hexadecanoyl-2-(4Z,7Z,10Z,13Z,16Z,19Z-docosahexaenoyl)-sn-glycero-3-phosphocholine + CMP + H(+). It catalyses the reaction 1,2-dioctanoyl-sn-glycerol + CDP-choline = 1,2-dioctanoyl-sn-glycero-3-phosphocholine + CMP + H(+). The protein operates within phospholipid metabolism; phosphatidylcholine biosynthesis; phosphatidylcholine from phosphocholine: step 2/2. In terms of biological role, catalyzes the final step of de novo phosphatidylcholine (PC) synthesis, i.e. the transfer of choline phosphate from CDP-choline to the free hydroxyl of a diacylglycerol (DAG), producing a PC. It thereby plays a central role in the formation and maintenance of vesicular membranes. The chain is Cholinephosphotransferase 1 from Homo sapiens (Human).